Reading from the N-terminus, the 166-residue chain is Crossover junction endodeoxyribonuclease RuvC (166 aa).

Active-site residues include aspartate 7, glutamate 68, and aspartate 141. Mg(2+) is bound by residues aspartate 7, glutamate 68, and aspartate 141.

Belongs to the RuvC family. Homodimer which binds Holliday junction (HJ) DNA. The HJ becomes 2-fold symmetrical on binding to RuvC with unstacked arms; it has a different conformation from HJ DNA in complex with RuvA. In the full resolvosome a probable DNA-RuvA(4)-RuvB(12)-RuvC(2) complex forms which resolves the HJ. It depends on Mg(2+) as a cofactor.

The protein resides in the cytoplasm. It carries out the reaction Endonucleolytic cleavage at a junction such as a reciprocal single-stranded crossover between two homologous DNA duplexes (Holliday junction).. In terms of biological role, the RuvA-RuvB-RuvC complex processes Holliday junction (HJ) DNA during genetic recombination and DNA repair. Endonuclease that resolves HJ intermediates. Cleaves cruciform DNA by making single-stranded nicks across the HJ at symmetrical positions within the homologous arms, yielding a 5'-phosphate and a 3'-hydroxyl group; requires a central core of homology in the junction. The consensus cleavage sequence is 5'-(A/T)TT(C/G)-3'. Cleavage occurs on the 3'-side of the TT dinucleotide at the point of strand exchange. HJ branch migration catalyzed by RuvA-RuvB allows RuvC to scan DNA until it finds its consensus sequence, where it cleaves and resolves the cruciform DNA. The polypeptide is Crossover junction endodeoxyribonuclease RuvC (Koribacter versatilis (strain Ellin345)).